Here is a 159-residue protein sequence, read N- to C-terminus: Ribonuclease H (159 aa).

The RNase H type-1 domain occupies 4 to 145; it reads THKQVNIYTD…CDKLARDAAE (142 aa). The Mg(2+) site is built by D13, E51, D73, and D137.

It belongs to the RNase H family. In terms of assembly, monomer. Requires Mg(2+) as cofactor.

It is found in the cytoplasm. The enzyme catalyses Endonucleolytic cleavage to 5'-phosphomonoester.. Functionally, endonuclease that specifically degrades the RNA of RNA-DNA hybrids. The polypeptide is Ribonuclease H (Shewanella denitrificans (strain OS217 / ATCC BAA-1090 / DSM 15013)).